A 437-amino-acid polypeptide reads, in one-letter code: Glutamate-1-semialdehyde 2,1-aminomutase (437 aa).

Lys-279 carries the N6-(pyridoxal phosphate)lysine modification.

The protein belongs to the class-III pyridoxal-phosphate-dependent aminotransferase family. HemL subfamily. As to quaternary structure, homodimer. The cofactor is pyridoxal 5'-phosphate.

The protein resides in the cytoplasm. The enzyme catalyses (S)-4-amino-5-oxopentanoate = 5-aminolevulinate. It functions in the pathway porphyrin-containing compound metabolism; protoporphyrin-IX biosynthesis; 5-aminolevulinate from L-glutamyl-tRNA(Glu): step 2/2. The chain is Glutamate-1-semialdehyde 2,1-aminomutase from Sorangium cellulosum (strain So ce56) (Polyangium cellulosum (strain So ce56)).